We begin with the raw amino-acid sequence, 184 residues long: Peptidyl-tRNA hydrolase (184 aa).

Residue Tyr14 coordinates tRNA. His19 functions as the Proton acceptor in the catalytic mechanism. TRNA is bound by residues Phe60 and Asn62.

The protein belongs to the PTH family. As to quaternary structure, monomer.

The protein resides in the cytoplasm. The enzyme catalyses an N-acyl-L-alpha-aminoacyl-tRNA + H2O = an N-acyl-L-amino acid + a tRNA + H(+). Its function is as follows. Hydrolyzes ribosome-free peptidyl-tRNAs (with 1 or more amino acids incorporated), which drop off the ribosome during protein synthesis, or as a result of ribosome stalling. Catalyzes the release of premature peptidyl moieties from peptidyl-tRNA molecules trapped in stalled 50S ribosomal subunits, and thus maintains levels of free tRNAs and 50S ribosomes. In Mesomycoplasma hyopneumoniae (strain 7448) (Mycoplasma hyopneumoniae), this protein is Peptidyl-tRNA hydrolase.